The sequence spans 601 residues: Translation initiation factor IF-2 (601 aa).

Residues 54-101 (GHTASAEPAPAQASGSPASPAQTEAQEAPQPTATATAEREPAAPPARE) are disordered. The span at 57–89 (ASAEPAPAQASGSPASPAQTEAQEAPQPTATAT) shows a compositional bias: low complexity. The 170-residue stretch at 104–273 (HRAPVVTIMG…SLTAELEDLR (170 aa)) folds into the tr-type G domain. A G1 region spans residues 113 to 120 (GHVDHGKT). 113–120 (GHVDHGKT) lines the GTP pocket. Residues 138–142 (GITQH) are G2. The tract at residues 159–162 (DTPG) is G3. GTP contacts are provided by residues 159–163 (DTPGH) and 213–216 (NKVD). The segment at 213-216 (NKVD) is G4. The segment at 249–251 (SAK) is G5.

The protein belongs to the TRAFAC class translation factor GTPase superfamily. Classic translation factor GTPase family. IF-2 subfamily.

It is found in the cytoplasm. In terms of biological role, one of the essential components for the initiation of protein synthesis. Protects formylmethionyl-tRNA from spontaneous hydrolysis and promotes its binding to the 30S ribosomal subunits. Also involved in the hydrolysis of GTP during the formation of the 70S ribosomal complex. This chain is Translation initiation factor IF-2, found in Deinococcus geothermalis (strain DSM 11300 / CIP 105573 / AG-3a).